Here is a 107-residue protein sequence, read N- to C-terminus: Small ribosomal subunit protein uS15 (107 aa).

N6-acetyllysine; alternate is present on Lys27. Lys27 carries the post-translational modification N6-succinyllysine; alternate. Lys27 participates in a covalent cross-link: Glycyl lysine isopeptide (Lys-Gly) (interchain with G-Cter in ubiquitin). Position 30 is a phosphoserine (Ser30). Lys34 carries the post-translational modification N6-succinyllysine. Tyr38 carries the post-translational modification Phosphotyrosine. Residue Lys43 forms a Glycyl lysine isopeptide (Lys-Gly) (interchain with G-Cter in SUMO2) linkage.

The protein belongs to the universal ribosomal protein uS15 family. Component of the small ribosomal subunit. Part of the small subunit (SSU) processome, composed of more than 70 proteins and the RNA chaperone small nucleolar RNA (snoRNA) U3. Post-translationally, ubiquitinated at Lys-27 by RNF14 and RNF25 in response to ribosome collisions (ribosome stalling).

Its subcellular location is the cytoplasm. The protein localises to the nucleus. It is found in the nucleolus. Its function is as follows. Component of the small ribosomal subunit. The ribosome is a large ribonucleoprotein complex responsible for the synthesis of proteins in the cell. Part of the small subunit (SSU) processome, first precursor of the small eukaryotic ribosomal subunit. During the assembly of the SSU processome in the nucleolus, many ribosome biogenesis factors, an RNA chaperone and ribosomal proteins associate with the nascent pre-rRNA and work in concert to generate RNA folding, modifications, rearrangements and cleavage as well as targeted degradation of pre-ribosomal RNA by the RNA exosome. The sequence is that of Small ribosomal subunit protein uS15 (RPS13) from Sus scrofa (Pig).